We begin with the raw amino-acid sequence, 138 residues long: Putative pre-16S rRNA nuclease (138 aa).

The protein belongs to the YqgF nuclease family.

It localises to the cytoplasm. Its function is as follows. Could be a nuclease involved in processing of the 5'-end of pre-16S rRNA. The polypeptide is Putative pre-16S rRNA nuclease (Clostridium tetani (strain Massachusetts / E88)).